The following is a 220-amino-acid chain: NAD(P)H-quinone oxidoreductase subunit M, chloroplastic (220 aa).

A chloroplast-targeting transit peptide spans 1-37; that stretch reads MATTASPFLSPAKLSLERRLPRATWTARRSVRFPPVR. The disordered stretch occupies residues 20-91; the sequence is LPRATWTARR…PVQPLAESKN (72 aa). Over residues 34–44 the composition is skewed to low complexity; that stretch reads PPVRAQDQQQQ.

It belongs to the NDH complex subunit M family. Part of the chloroplast NDH complex, composed of a mixture of chloroplast and nucleus encoded subunits. Component of the NDH subcomplex A, at least composed of ndhH, ndhI, ndhJ, ndhK, ndhL, ndhM, ndhN and ndhO.

The protein localises to the plastid. It localises to the chloroplast thylakoid membrane. It carries out the reaction a plastoquinone + NADH + (n+1) H(+)(in) = a plastoquinol + NAD(+) + n H(+)(out). The catalysed reaction is a plastoquinone + NADPH + (n+1) H(+)(in) = a plastoquinol + NADP(+) + n H(+)(out). Its function is as follows. NDH shuttles electrons from NAD(P)H:plastoquinone, via FMN and iron-sulfur (Fe-S) centers, to quinones in the photosynthetic chain and possibly in a chloroplast respiratory chain. The immediate electron acceptor for the enzyme in this species is believed to be plastoquinone. Couples the redox reaction to proton translocation, and thus conserves the redox energy in a proton gradient. The sequence is that of NAD(P)H-quinone oxidoreductase subunit M, chloroplastic from Oryza sativa subsp. indica (Rice).